We begin with the raw amino-acid sequence, 213 residues long: Uridine kinase (213 aa).

Position 15–22 (15–22 (GASASGKS)) interacts with ATP.

The protein belongs to the uridine kinase family.

It is found in the cytoplasm. The enzyme catalyses uridine + ATP = UMP + ADP + H(+). The catalysed reaction is cytidine + ATP = CMP + ADP + H(+). The protein operates within pyrimidine metabolism; CTP biosynthesis via salvage pathway; CTP from cytidine: step 1/3. Its pathway is pyrimidine metabolism; UMP biosynthesis via salvage pathway; UMP from uridine: step 1/1. The protein is Uridine kinase of Proteus mirabilis (strain HI4320).